The chain runs to 202 residues: Polyamine-modulated factor 1 (202 aa).

The span at 1 to 15 shows a compositional bias: basic and acidic residues; it reads MAEVSRDSEAAERGP. A disordered region spans residues 1–26; it reads MAEVSRDSEAAERGPEGSSPEAVPGD. Residues 153–194 adopt a coiled-coil conformation; the sequence is EAKNQELADAVLAGRRQVEELQQQVRALQQTWQALHREQREL.

In terms of assembly, component of the MIS12 complex composed of MIS12, DSN1, NSL1 and PMF1. Interacts with COPS7A. Interacts via its coiled-coil domain with the leucine-zipper domain of NFE2L2. The interaction with NFE2L2 is required for the transcriptional regulation of SSAT.

It is found in the nucleus. It localises to the chromosome. Its subcellular location is the centromere. The protein resides in the kinetochore. Its function is as follows. Part of the MIS12 complex which is required for normal chromosome alignment and segregation and for kinetochore formation during mitosis. May act as a cotranscription partner of NFE2L2 involved in regulation of polyamine-induced transcription of SSAT. The protein is Polyamine-modulated factor 1 of Mus musculus (Mouse).